The primary structure comprises 336 residues: Anthranilate phosphoribosyltransferase (336 aa).

5-phospho-alpha-D-ribose 1-diphosphate contacts are provided by residues glycine 78, 81 to 82 (GD), threonine 86, 88 to 91 (NVST), 106 to 114 (KHGNYSVSS), and serine 118. Glycine 78 contacts anthranilate. Serine 90 is a Mg(2+) binding site. Asparagine 109 serves as a coordination point for anthranilate. Arginine 164 lines the anthranilate pocket. 2 residues coordinate Mg(2+): aspartate 222 and glutamate 223.

This sequence belongs to the anthranilate phosphoribosyltransferase family. As to quaternary structure, homodimer. Mg(2+) is required as a cofactor.

It carries out the reaction N-(5-phospho-beta-D-ribosyl)anthranilate + diphosphate = 5-phospho-alpha-D-ribose 1-diphosphate + anthranilate. It participates in amino-acid biosynthesis; L-tryptophan biosynthesis; L-tryptophan from chorismate: step 2/5. Its function is as follows. Catalyzes the transfer of the phosphoribosyl group of 5-phosphorylribose-1-pyrophosphate (PRPP) to anthranilate to yield N-(5'-phosphoribosyl)-anthranilate (PRA). The polypeptide is Anthranilate phosphoribosyltransferase (Halobacterium salinarum (strain ATCC 29341 / DSM 671 / R1)).